The sequence spans 317 residues: ADP-L-glycero-D-manno-heptose-6-epimerase (317 aa).

NADP(+)-binding positions include 10 to 11 (FI), 31 to 32 (DD), Lys38, Lys53, 76 to 80 (QGACS), and Asn93. The active-site Proton acceptor is Tyr140. Lys144 serves as a coordination point for NADP(+). Asn169 serves as a coordination point for substrate. Positions 170 and 178 each coordinate NADP(+). Catalysis depends on Lys178, which acts as the Proton acceptor. Substrate-binding positions include Ala180, His187, 201-204 (FEGC), Arg214, and Tyr278.

Belongs to the NAD(P)-dependent epimerase/dehydratase family. HldD subfamily. Homopentamer. NADP(+) serves as cofactor.

The catalysed reaction is ADP-D-glycero-beta-D-manno-heptose = ADP-L-glycero-beta-D-manno-heptose. The protein operates within nucleotide-sugar biosynthesis; ADP-L-glycero-beta-D-manno-heptose biosynthesis; ADP-L-glycero-beta-D-manno-heptose from D-glycero-beta-D-manno-heptose 7-phosphate: step 4/4. In terms of biological role, catalyzes the interconversion between ADP-D-glycero-beta-D-manno-heptose and ADP-L-glycero-beta-D-manno-heptose via an epimerization at carbon 6 of the heptose. The polypeptide is ADP-L-glycero-D-manno-heptose-6-epimerase (Nitrosococcus oceani (strain ATCC 19707 / BCRC 17464 / JCM 30415 / NCIMB 11848 / C-107)).